Here is a 546-residue protein sequence, read N- to C-terminus: MTPGEVRRLYFIIRTFLSYGLDELIPKMRITLPLRLWRYSLFWMPNRHKDKPLGERLRLALQELGPVWIKFGQMLSTRRDLFPPHIADQLALLQDKVAPFDGRLAKQQIEAAMGGLPVEAWFDDFDIKPLASASIAQVHTARLKSNGKEVVIKVIRPDILPVIKADLKLIYRLARWVPRLLPDGRRLRPTEVVREYEKTLIDELNLLRESANAIQLRRNFEDSPMLYIPEVYPDYCSEGMMVMERIYGIPVSDVAALEKNGTNMKLLAERGVQVFFTQVFRDSFFHADMHPGNIFVSYEHPENPKYIGIDCGIVGSLNKEDKRYLAENFIAFFNRDYRKVAELHVDSGWVPPDTNVEEFEFAIRTVCEPIFEKPLAEISFGHVLLNLFNTARRFNMEVQPQLVLLQKTLLYIEGVGRQLYPQLDLWKTAKPFLESWIKDQVGIPALVRALKEKAPFWVEKMPELPELVYDSLRQGKYLQHSVDKIARELQSNHVRQGQSRYLLGIGATLVLSGTFLLVSRPEWGLMPGWLMAAGLVAWFVGWRKTR.

A Protein kinase domain is found at 124–502; it reads DFDIKPLASA…HVRQGQSRYL (379 aa). Residues 130-138 and Lys-153 contribute to the ATP site; that span reads LASASIAQV. Asp-288 functions as the Proton acceptor in the catalytic mechanism. Transmembrane regions (helical) follow at residues 501 to 521 and 522 to 542; these read YLLG…VSRP and EWGL…FVGW.

The protein belongs to the ABC1 family. UbiB subfamily.

The protein resides in the cell inner membrane. The protein operates within cofactor biosynthesis; ubiquinone biosynthesis [regulation]. Functionally, is probably a protein kinase regulator of UbiI activity which is involved in aerobic coenzyme Q (ubiquinone) biosynthesis. The protein is Probable protein kinase UbiB of Escherichia fergusonii (strain ATCC 35469 / DSM 13698 / CCUG 18766 / IAM 14443 / JCM 21226 / LMG 7866 / NBRC 102419 / NCTC 12128 / CDC 0568-73).